A 198-amino-acid polypeptide reads, in one-letter code: UPF0314 protein Saro_1818 (198 aa).

A run of 5 helical transmembrane segments spans residues 13-33 (GGSL…LGMG), 62-82 (WYSF…HIVW), 96-116 (LALA…PIII), 153-173 (APVL…LWAI), and 177-197 (LALN…WQGG).

Belongs to the UPF0314 family.

The protein localises to the cell membrane. In Novosphingobium aromaticivorans (strain ATCC 700278 / DSM 12444 / CCUG 56034 / CIP 105152 / NBRC 16084 / F199), this protein is UPF0314 protein Saro_1818.